Here is a 345-residue protein sequence, read N- to C-terminus: N-acetyl-gamma-glutamyl-phosphate reductase (345 aa).

Residue Cys149 is part of the active site.

This sequence belongs to the NAGSA dehydrogenase family. Type 1 subfamily.

The protein localises to the cytoplasm. It carries out the reaction N-acetyl-L-glutamate 5-semialdehyde + phosphate + NADP(+) = N-acetyl-L-glutamyl 5-phosphate + NADPH + H(+). It participates in amino-acid biosynthesis; L-arginine biosynthesis; N(2)-acetyl-L-ornithine from L-glutamate: step 3/4. Functionally, catalyzes the NADPH-dependent reduction of N-acetyl-5-glutamyl phosphate to yield N-acetyl-L-glutamate 5-semialdehyde. This chain is N-acetyl-gamma-glutamyl-phosphate reductase, found in Geobacillus stearothermophilus (Bacillus stearothermophilus).